Reading from the N-terminus, the 247-residue chain is DNA polymerase sliding clamp 1 (247 aa).

Belongs to the PCNA family. As to quaternary structure, heterotrimer. The subunits circularize to form a toroid; DNA passes through its center. Replication factor C (RFC) is required to load the toroid on the DNA.

Its function is as follows. Sliding clamp subunit that acts as a moving platform for DNA processing. Responsible for tethering the catalytic subunit of DNA polymerase and other proteins to DNA during high-speed replication. The polypeptide is DNA polymerase sliding clamp 1 (Aeropyrum pernix (strain ATCC 700893 / DSM 11879 / JCM 9820 / NBRC 100138 / K1)).